The chain runs to 520 residues: T-box transcription factor TBX22 (520 aa).

The interval 1-91 (MALSSRARAF…NSSESLEEKD (91 aa)) is disordered. Basic and acidic residues predominate over residues 33 to 49 (PELREKKGGEEEEERRS). The span at 67-84 (STSASSGCGSDSGYGNSS) shows a compositional bias: low complexity. Residues 96–283 (LQGSELWKRF…RNPFAKGFRD (188 aa)) constitute a DNA-binding region (T-box).

In terms of tissue distribution, seems to be expressed at a low level.

It localises to the nucleus. In terms of biological role, probable transcriptional regulator involved in developmental processes. This is major determinant crucial to palatogenesis. This chain is T-box transcription factor TBX22 (TBX22), found in Homo sapiens (Human).